The sequence spans 147 residues: SsrA-binding protein (147 aa).

Positions 119 to 147 (AKGKKQHDKRESEKQKEWERDKQRLMRPK) are disordered. The span at 126 to 147 (DKRESEKQKEWERDKQRLMRPK) shows a compositional bias: basic and acidic residues.

It belongs to the SmpB family.

It is found in the cytoplasm. In terms of biological role, required for rescue of stalled ribosomes mediated by trans-translation. Binds to transfer-messenger RNA (tmRNA), required for stable association of tmRNA with ribosomes. tmRNA and SmpB together mimic tRNA shape, replacing the anticodon stem-loop with SmpB. tmRNA is encoded by the ssrA gene; the 2 termini fold to resemble tRNA(Ala) and it encodes a 'tag peptide', a short internal open reading frame. During trans-translation Ala-aminoacylated tmRNA acts like a tRNA, entering the A-site of stalled ribosomes, displacing the stalled mRNA. The ribosome then switches to translate the ORF on the tmRNA; the nascent peptide is terminated with the 'tag peptide' encoded by the tmRNA and targeted for degradation. The ribosome is freed to recommence translation, which seems to be the essential function of trans-translation. The polypeptide is SsrA-binding protein (Nitrosospira multiformis (strain ATCC 25196 / NCIMB 11849 / C 71)).